Consider the following 317-residue polypeptide: Acetyl-coenzyme A carboxylase carboxyl transferase subunit alpha (317 aa).

The 254-residue stretch at 40-293 (LEVRVREAIV…GDVIANALGE (254 aa)) folds into the CoA carboxyltransferase C-terminal domain.

It belongs to the AccA family. As to quaternary structure, acetyl-CoA carboxylase is a heterohexamer composed of biotin carboxyl carrier protein (AccB), biotin carboxylase (AccC) and two subunits each of ACCase subunit alpha (AccA) and ACCase subunit beta (AccD).

It localises to the cytoplasm. The enzyme catalyses N(6)-carboxybiotinyl-L-lysyl-[protein] + acetyl-CoA = N(6)-biotinyl-L-lysyl-[protein] + malonyl-CoA. It participates in lipid metabolism; malonyl-CoA biosynthesis; malonyl-CoA from acetyl-CoA: step 1/1. Functionally, component of the acetyl coenzyme A carboxylase (ACC) complex. First, biotin carboxylase catalyzes the carboxylation of biotin on its carrier protein (BCCP) and then the CO(2) group is transferred by the carboxyltransferase to acetyl-CoA to form malonyl-CoA. The sequence is that of Acetyl-coenzyme A carboxylase carboxyl transferase subunit alpha from Rhizobium leguminosarum bv. trifolii (strain WSM2304).